The primary structure comprises 383 residues: GTP-binding protein 10 (383 aa).

Positions 13–148 constitute an Obg domain; the sequence is GNFIDNLRIY…RIIHLDLKLI (136 aa). Residues 149-344 form the OBG-type G domain; the sequence is SDVGLVGFPN…LIGCIRKTMD (196 aa). GTP is bound by residues 155–162, 202–206, and 278–281; these read GFPNAGKS, DLPGL, and NKMD. The segment at 362-383 is disordered; it reads LQKETSRTVKRNLKNSPQRTHH. Residues 369–383 show a composition bias toward basic residues; that stretch reads TVKRNLKNSPQRTHH.

It belongs to the TRAFAC class OBG-HflX-like GTPase superfamily. OBG GTPase family.

The protein resides in the nucleus. Its subcellular location is the nucleolus. Functionally, may be involved in the ribosome maturation process. The chain is GTP-binding protein 10 (gtpbp10) from Xenopus tropicalis (Western clawed frog).